Reading from the N-terminus, the 1978-residue chain is Sodium channel protein type 8 subunit alpha (1978 aa).

2 disordered regions span residues 1 to 20 (MAARVLAPPGPDSFKPFTPE) and 28 to 62 (RIAESKLKKPPKADGSHREDDEDSKPKPNSDLEAG). Topologically, residues 1–132 (MAARVLAPPG…RIAIKILIHS (132 aa)) are cytoplasmic. Residues 28-61 (RIAESKLKKPPKADGSHREDDEDSKPKPNSDLEA) are compositionally biased toward basic and acidic residues. One copy of the I repeat lies at 114–442 (ILSPFNLIRR…KAMLEQLKKQ (329 aa)). The chain crosses the membrane as a helical span at residues 133 to 151 (VFSMIIMCTILTNCVFMTF). Residues 152-158 (SNPPEWS) lie on the Extracellular side of the membrane. A helical membrane pass occupies residues 159–179 (KNVEYTFTGIYTFESLVKIIA). Residues 180–193 (RGFCIDGFTFLRDP) are Cytoplasmic-facing. The chain crosses the membrane as a helical span at residues 194–211 (WNWLDFSVIMMAYVTEFV). Residues 212–217 (DLGNVS) are Extracellular-facing. Asn215 carries N-linked (GlcNAc...) asparagine glycosylation. Residues 218–234 (ALRTFRVLRALKTISVI) form a helical membrane-spanning segment. The Cytoplasmic segment spans residues 235-253 (PGLKTIVGALIQSVKKLSD). The helical transmembrane segment at 254–273 (VMILTVFCLSVFALIGLQLF) threads the bilayer. At 274–355 (MGNLRNKCVV…PNYGYTSFDT (82 aa)) the chain is on the extracellular side. Cys281 and Cys333 form a disulfide bridge. N-linked (GlcNAc...) asparagine glycans are attached at residues Asn289, Asn295, Asn308, and Asn326. The pore-forming intramembrane region spans 356-380 (FSWAFLALFRLMTQDYWENLYQLTL). Glu373 contacts Na(+). The Extracellular segment spans residues 381–387 (RAAGKTY). A helical membrane pass occupies residues 388-408 (MIFFVLVIFVGSFYLVNLILA). Residues 409–751 (VVAMAYEEQN…EIVNLIVMDP (343 aa)) lie on the Cytoplasmic side of the membrane. Disordered regions lie at residues 446 to 530 (AQAA…KAFR) and 576 to 597 (DPGSENEFADDEHSTVEESEGR). The span at 473–486 (SPRSSSELSKLSSK) shows a compositional bias: low complexity. Residues 489–500 (KERRNRRKKRKQ) are compositionally biased toward basic residues. Basic and acidic residues-rich tracts occupy residues 501-530 (KELSEGEEKGDPEKVFKSESEDGMRRKAFR) and 586-597 (DEHSTVEESEGR). Phosphoserine is present on residues Ser518 and Ser520. Residues 733-1005 (CHPYWIKLKE…QISVIRIKKG (273 aa)) form an II repeat. The chain crosses the membrane as a helical span at residues 752–770 (FVDLAITICIVLNTLFMAM). The Extracellular portion of the chain corresponds to 771–781 (EHHPMTPQFEH). Residues 782–801 (VLAVGNLVFTGIFTAEMFLK) form a helical membrane-spanning segment. Residues 802–815 (LIAMDPYYYFQEGW) lie on the Cytoplasmic side of the membrane. The helical transmembrane segment at 816 to 835 (NIFDGFIVSLSLMELGLADV) threads the bilayer. Residues 836–837 (EG) lie on the Extracellular side of the membrane. A helical membrane pass occupies residues 838–855 (LSVLRSFRLLRVFKLAKS). The Cytoplasmic segment spans residues 856–871 (WPTLNMLIKIIGNSVG). A helical transmembrane segment spans residues 872–890 (ALGNLTLVLAIIVFIFAVV). Over 891-919 (GMQLFGKSYKECVCKISQECKLPRWHMND) the chain is Extracellular. The cysteines at positions 904 and 910 are disulfide-linked. The segment at residues 920 to 940 (FFHSFLIVFRVLCGEWIETMW) is an intramembrane region (pore-forming). Glu934 and Glu937 together coordinate Na(+). Over 941-953 (DCMEVAGQAMCLI) the chain is Extracellular. The cysteines at positions 942 and 951 are disulfide-linked. A helical transmembrane segment spans residues 954–974 (VFMMVMVIGNLVVLNLFLALL). Residues 975–1197 (LSSFSADNLA…TCFLIVEHNW (223 aa)) are Cytoplasmic-facing. Positions 1105–1146 (NLNTEDVSSESDPEGSKDKLDDTSSSEGSTIDIKPEVEEVPV) are disordered. One copy of the III repeat lies at 1178-1493 (LGKSWWILRK…KKYYNAMKKL (316 aa)). Residues 1198-1215 (FETFIIFMILLSSGALAF) traverse the membrane as a helical segment. The Extracellular portion of the chain corresponds to 1216-1228 (EDIYIEQRKTIRT). A helical transmembrane segment spans residues 1229–1247 (ILEYADKVFTYIFILEMLL). The Cytoplasmic portion of the chain corresponds to 1248 to 1261 (KWTAYGFVKFFTNA). A helical transmembrane segment spans residues 1262-1280 (WCWLDFLIVAVSLVSLIAN). The Extracellular segment spans residues 1281-1288 (ALGYSELG). The helical transmembrane segment at 1289 to 1307 (AIKSLRTLRALRPLRALSR) threads the bilayer. The Cytoplasmic portion of the chain corresponds to 1308–1324 (FEGMRVVVNALVGAIPS). The helical transmembrane segment at 1325 to 1344 (IMNVLLVCLIFWLIFSIMGV) threads the bilayer. Over 1345–1397 (NLFAGKYHYCFNETSEIRFEIDEVNNKTDCEKLMEGNNTEIRWKNVKINFDNV) the chain is Extracellular. A disulfide bridge links Cys1354 with Cys1374. N-linked (GlcNAc...) asparagine glycosylation is found at Asn1356, Asn1370, and Asn1381. Positions 1398–1419 (GAGYLALLQVATFKGWMDIMYA) form an intramembrane region, pore-forming. At 1420-1436 (AVDSRKPDEQPDYEGNI) the chain is on the extracellular side. Residues 1437–1458 (YMYIYFVIFIIFGSFFTLNLFI) traverse the membrane as a helical segment. Residues 1459 to 1521 (GVIIDNFNQQ…IVFDFVTQQA (63 aa)) are Cytoplasmic-facing. Position 1495 is a phosphoserine; by PKC (Ser1495). The IV repeat unit spans residues 1502–1799 (IPRPLNKIQG…WEKFDPDATQ (298 aa)). A helical transmembrane segment spans residues 1522-1539 (FDIVIMMLICLNMVTMMV). Over 1540 to 1550 (ETDTQSKQMEN) the chain is Extracellular. A helical membrane pass occupies residues 1551–1569 (ILYWINLVFVIFFTCECVL). Topologically, residues 1570–1581 (KMFALRHYYFTI) are cytoplasmic. Residues 1582-1599 (GWNIFDFVVVILSIVGMF) form a helical membrane-spanning segment. Over 1600 to 1612 (LADIIEKYFVSPT) the chain is Extracellular. A helical membrane pass occupies residues 1613 to 1629 (LFRVIRLARIGRILRLI). The Cytoplasmic segment spans residues 1630 to 1648 (KGAKGIRTLLFALMMSLPA). A helical membrane pass occupies residues 1649–1666 (LFNIGLLLFLVMFIFSIF). Residues 1667-1688 (GMSNFAYVKHEAGIDDMFNFET) are Extracellular-facing. Positions 1689 to 1711 (FGNSMICLFQITTSAGWDGLLLP) form an intramembrane region, pore-forming. The Extracellular segment spans residues 1712-1740 (ILNRPPDCSLDKEHPGSGFKGDCGNPSVG). The cysteines at positions 1719 and 1734 are disulfide-linked. The helical transmembrane segment at 1741–1763 (IFFFVSYIIISFLIVVNMYIAII) threads the bilayer. The Cytoplasmic segment spans residues 1764–1978 (LENFSVATEE…RQKEVRESKC (215 aa)). The region spanning 1893-1922 (EEVSAVVLQRAYRGHLARRGFICRKITSNK) is the IQ domain. The tract at residues 1924–1978 (ENGGTHREKKESTPSTASLPSYDSVTKPDKEKQQRAEEGRRERAKRQKEVRESKC) is disordered. Polar residues predominate over residues 1936 to 1947 (TPSTASLPSYDS). Residues 1949–1978 (TKPDKEKQQRAEEGRRERAKRQKEVRESKC) are compositionally biased toward basic and acidic residues.

It belongs to the sodium channel (TC 1.A.1.10) family. Nav1.6/SCN8A subfamily. As to quaternary structure, the voltage-sensitive sodium channel consists of an ion-conducting pore-forming alpha subunit regulated by one or more beta-1 (SCN1B), beta-2 (SCN2B), beta-3 (SCN3B) and/or beta-4 (SCN4B) subunits. Beta-1 (SCN1B) and beta-3 (SCN3B) are non-covalently associated with alpha, while beta-2 (SCN2B) and beta-4 (SCN4B) are covalently linked by disulfide bonds. Interacts with FGF13. Interacts with NEDD4 and NEDD4L. Interacts with FGF14, GBG3, GBB2 and SCN1B. Interacts with TMEM233. Interacts with the conotoxin GVIIJ. Interacts with the scorpion toxin BMK M1. Interacts with CALM1; the interaction modulates the inactivation rate of SCN8A. Post-translationally, may be ubiquitinated by NEDD4L; which would promote its endocytosis. In terms of processing, phosphorylation at Ser-1495 by PKC in a highly conserved cytoplasmic loop slows inactivation of the sodium channel and reduces peak sodium currents. As to expression, expressed in the hippocampus (at protein level). Expressed in brain, cerebellum and spinal cord. In terms of tissue distribution, expressed in non-neuronal tissues, such as monocytes/macrophages.

The protein localises to the cell membrane. It localises to the cell projection. It is found in the axon. The protein resides in the cytoplasmic vesicle. Its subcellular location is the podosome. It catalyses the reaction Na(+)(in) = Na(+)(out). In terms of biological role, pore-forming subunit of a voltage-gated sodium channel complex assuming opened or closed conformations in response to the voltage difference across membranes and through which sodium ions selectively pass along their electrochemical gradient. Contributes to neuronal excitability by regulating action potential threshold and propagation. Its function is as follows. More specifically expressed in non-neuronal cells, could play a role in sodium release from intracellular compartments and participate in the control of podosomes formation and macrophages adhesion and movement. In Mus musculus (Mouse), this protein is Sodium channel protein type 8 subunit alpha.